A 395-amino-acid chain; its full sequence is Vascular endothelial growth factor A, long form (395 aa).

2 disordered regions span residues 1 to 45 (MTDR…VEGV) and 73 to 175 (EAEP…AGPG). A compositionally biased stretch (low complexity) spans 73–85 (EAEPSGAARSASS). Residues 91–102 (QPEEGEEEEEKE) are compositionally biased toward acidic residues. 2 stretches are compositionally biased toward low complexity: residues 123–143 (AAVC…ARAS) and 165–175 (RRGSASRAGPG). 3 disulfides stabilise this stretch: C232–C274, C263–C308, and C267–C310. N-linked (GlcNAc...) asparagine glycosylation is present at N281. Residues 314-323 (KDRARQEKKS) show a composition bias toward basic and acidic residues. The tract at residues 314–344 (KDRARQEKKSVRGKGKGQKRKRKKSRYKSWS) is disordered. A compositionally biased stretch (basic residues) spans 324-340 (VRGKGKGQKRKRKKSRY).

This sequence belongs to the PDGF/VEGF growth factor family. As to quaternary structure, homodimer; disulfide-linked. Also found as heterodimer with PGF. Interacts with NRP1. Interacts with isoform 2 of BSG. Interacts with CD82; this interaction inhibits VEGFA-mediated signaling pathway. In terms of processing, produced by use of an alternative upstream CUG codon and post-translationally processed into the N-terminal N-VEGF form and the C-terminal secreted VEGFA form. As to expression, higher expression in pituitary tumors than the pituitary gland. In terms of tissue distribution, widely expressed. Not widely expressed.

The protein resides in the cytoplasm. Its subcellular location is the nucleus. The protein localises to the secreted. It is found in the endoplasmic reticulum. It localises to the golgi apparatus. The protein resides in the extracellular space. Its subcellular location is the extracellular matrix. Participates in the induction of key genes involved in the response to hypoxia and in the induction of angiogenesis such as HIF1A. Involved in protecting cells from hypoxia-mediated cell death. Its function is as follows. Growth factor active in angiogenesis, vasculogenesis and endothelial cell growth. Induces endothelial cell proliferation, promotes cell migration, inhibits apoptosis and induces permeabilization of blood vessels. Binds to the FLT1/VEGFR1 and KDR/VEGFR2 receptors, heparan sulfate and heparin. Binds to the NRP1/neuropilin-1 receptor. Binding to NRP1 initiates a signaling pathway needed for motor neuron axon guidance and cell body migration, including for the caudal migration of facial motor neurons from rhombomere 4 to rhombomere 6 during embryonic development. Also binds the DEAR/FBXW7-AS1 receptor. Functionally, binds to the KDR receptor but does not activate downstream signaling pathways, does not activate angiogenesis and inhibits tumor growth. The sequence is that of Vascular endothelial growth factor A, long form (VEGFA) from Homo sapiens (Human).